The sequence spans 637 residues: 3D-(3,5/4)-trihydroxycyclohexane-1,2-dione hydrolase (637 aa).

Position 66 (Glu66) interacts with thiamine diphosphate. The tract at residues Ser442–Gly522 is thiamine pyrophosphate binding. Residues Asp493 and Asn520 each coordinate Mg(2+).

The protein belongs to the TPP enzyme family. It depends on Mg(2+) as a cofactor. Requires thiamine diphosphate as cofactor.

The catalysed reaction is 3D-3,5/4-trihydroxycyclohexane-1,2-dione + H2O = 5-deoxy-D-glucuronate + H(+). It participates in polyol metabolism; myo-inositol degradation into acetyl-CoA; acetyl-CoA from myo-inositol: step 3/7. Its function is as follows. Involved in the cleavage of the C1-C2 bond of 3D-(3,5/4)-trihydroxycyclohexane-1,2-dione (THcHDO) to yield 5-deoxy-glucuronate (5DG). This chain is 3D-(3,5/4)-trihydroxycyclohexane-1,2-dione hydrolase (iolD), found in Bacillus subtilis (strain 168).